Consider the following 818-residue polypeptide: Nibrin (818 aa).

The FHA domain occupies Tyr22–Leu70. 2 BRCT domains span residues Ser91–Ser168 and Gly211–Ile301. 3 disordered regions span residues Ala372–Arg716, Asn729–Val757, and Glu793–Arg818. Over residues Lys379 to Val405 the composition is skewed to polar residues. Residues Val409 to Glu419 show a composition bias toward low complexity. Polar residues predominate over residues Ala444–Ser469. Residues Ser470–Arg475 carry the Nuclear localization signal motif. The span at Glu515 to Ser530 shows a compositional bias: polar residues. Positions Thr549 to Glu571 are enriched in acidic residues. A compositionally biased stretch (polar residues) spans Gly586 to Val602. Positions Thr603–Lys612 are enriched in basic and acidic residues. The span at Asn613–Gln625 shows a compositional bias: low complexity. Polar residues-rich tracts occupy residues Val633–Arg644 and Ser653–Asn662. The span at Lys663 to Val675 shows a compositional bias: basic and acidic residues. 2 stretches are compositionally biased toward polar residues: residues Val678–Glu692 and Met699–Pro708. The segment covering Glu793–Phe808 has biased composition (basic and acidic residues). Positions Gly804–Arg813 match the FxF/Y motif motif.

The protein belongs to the Nibrin family. Component of the MRN complex composed of two heterodimers rad50 and mre11 associated with a single nbn.

The protein localises to the nucleus. Its subcellular location is the chromosome. It localises to the PML body. The protein resides in the telomere. Functionally, component of the MRN complex, which plays a central role in double-strand break (DSB) repair, DNA recombination, maintenance of telomere integrity and meiosis. The MRN complex is involved in the repair of DNA double-strand breaks (DSBs) via homologous recombination (HR), an error-free mechanism which primarily occurs during S and G2 phases. The complex (1) mediates the end resection of damaged DNA, which generates proper single-stranded DNA, a key initial steps in HR, and is (2) required for the recruitment of other repair factors and efficient activation of ATM and ATR upon DNA damage. The MRN complex possesses single-strand endonuclease activity and double-strand-specific 3'-5' exonuclease activity, which are provided by MRE11, to initiate end resection, which is required for single-strand invasion and recombination. Within the MRN complex, nbn acts as a protein-protein adapter, which specifically recognizes and binds phosphorylated proteins, promoting their recruitment to DNA damage sites. Recruits mre11 and rad50 components of the MRN complex to DSBs in response to DNA damage. Promotes the recruitment of PI3/PI4-kinase family members atm, atr, and probably DNA-PKcs to the DNA damage sites, activating their functions. Mediates the recruitment of phosphorylated rbbp8/CtIP to DSBs, leading to cooperation between the MRN complex and rbbp8/CtIP to initiate end resection. The MRN complex and rbbp8/CtIP are also required for chromosome alignment during metaphase. The chain is Nibrin (nbn) from Danio rerio (Zebrafish).